Reading from the N-terminus, the 169-residue chain is Cuticle protein 21 (169 aa).

Repeat copies occupy residues 21–24 (AAPV), 27–30 (AAPA), 33–36 (AAPV), 39–42 (AAPA), 47–50 (AAPV), and 53–56 (AAPA). The Chitin-binding type R&amp;R domain occupies 65–135 (NPQYSYAYNV…KEAGAHPAPV (71 aa)). 3 consecutive repeat copies span residues 140–143 (AAPV), 146–149 (AAPA), and 160–163 (AAPA).

Functionally, component of the cuticle of migratory locust which contains more than 100 different structural proteins. The sequence is that of Cuticle protein 21 (ACP21) from Locusta migratoria (Migratory locust).